The primary structure comprises 130 residues: Protein ApaG (130 aa).

Residues 3–127 (KAETRGIMVT…FSLDSPHLRR (125 aa)) enclose the ApaG domain.

The chain is Protein ApaG from Methylorubrum extorquens (strain CM4 / NCIMB 13688) (Methylobacterium extorquens).